A 523-amino-acid chain; its full sequence is 2-isopropylmalate synthase (523 aa).

Residues 5–267 (VIIFDTTLRD…HTAINHQEIW (263 aa)) enclose the Pyruvate carboxyltransferase domain. The Mn(2+) site is built by D14, H202, H204, and N238. Positions 392 to 523 (RLDYFSVQSG…QHNENNKETV (132 aa)) are regulatory domain.

The protein belongs to the alpha-IPM synthase/homocitrate synthase family. LeuA type 1 subfamily. Homodimer. Mn(2+) serves as cofactor.

The protein localises to the cytoplasm. The enzyme catalyses 3-methyl-2-oxobutanoate + acetyl-CoA + H2O = (2S)-2-isopropylmalate + CoA + H(+). The protein operates within amino-acid biosynthesis; L-leucine biosynthesis; L-leucine from 3-methyl-2-oxobutanoate: step 1/4. In terms of biological role, catalyzes the condensation of the acetyl group of acetyl-CoA with 3-methyl-2-oxobutanoate (2-ketoisovalerate) to form 3-carboxy-3-hydroxy-4-methylpentanoate (2-isopropylmalate). This chain is 2-isopropylmalate synthase, found in Escherichia coli O157:H7.